The following is a 360-amino-acid chain: tRNA (guanine(37)-N(1))-methyltransferase (360 aa).

S-adenosyl-L-methionine contacts are provided by residues arginine 197, 235 to 236, and asparagine 283; that span reads DL.

The protein belongs to the class I-like SAM-binding methyltransferase superfamily. TRM5/TYW2 family. In terms of assembly, monomer.

Its subcellular location is the mitochondrion matrix. The protein localises to the nucleus. It is found in the cytoplasm. The catalysed reaction is guanosine(37) in tRNA + S-adenosyl-L-methionine = N(1)-methylguanosine(37) in tRNA + S-adenosyl-L-homocysteine + H(+). Functionally, specifically methylates the N1 position of guanosine-37 in various cytoplasmic and mitochondrial tRNAs. Methylation is not dependent on the nature of the nucleoside 5' of the target nucleoside. This is the first step in the biosynthesis of wybutosine (yW), a modified base adjacent to the anticodon of tRNAs and required for accurate decoding. The protein is tRNA (guanine(37)-N(1))-methyltransferase of Encephalitozoon cuniculi (strain GB-M1) (Microsporidian parasite).